The following is a 152-amino-acid chain: Superoxide dismutase [Cu-Zn] 1 (152 aa).

Cu cation-binding residues include histidine 45, histidine 47, and histidine 62. Residues cysteine 56 and cysteine 145 are joined by a disulfide bond. The Zn(2+) site is built by histidine 62, histidine 70, histidine 79, and aspartate 82. A Cu cation-binding site is contributed by histidine 119.

It belongs to the Cu-Zn superoxide dismutase family. Homodimer. Interacts with DJ1A and CCS. Cu cation is required as a cofactor. Requires Zn(2+) as cofactor. Expressed in leaves (at protein level). The spatial localization is regulated by miR398-mediated silencing. Mostly present in flowers, old rosette leaves and inflorescence, and, to a lower extent, in cauline leaves, stems and roots.

Its subcellular location is the cytoplasm. The protein localises to the cytosol. It localises to the nucleus. It catalyses the reaction 2 superoxide + 2 H(+) = H2O2 + O2. Destroys radicals which are normally produced within the cells and which are toxic to biological systems. The protein is Superoxide dismutase [Cu-Zn] 1 (CSD1) of Arabidopsis thaliana (Mouse-ear cress).